The primary structure comprises 405 residues: Enoyl-[acyl-carrier-protein] reductase [NADH] (405 aa).

NAD(+) contacts are provided by residues 51 to 56, 77 to 78, 114 to 115, and 142 to 143; these read GASSGY, FE, DA, and LA. Tyrosine 228 serves as a coordination point for substrate. The active-site Proton donor is tyrosine 238. NAD(+) is bound by residues lysine 247 and 276-278; that span reads VVT.

The protein belongs to the TER reductase family. Monomer.

It catalyses the reaction a 2,3-saturated acyl-[ACP] + NAD(+) = a (2E)-enoyl-[ACP] + NADH + H(+). It participates in lipid metabolism; fatty acid biosynthesis. In terms of biological role, involved in the final reduction of the elongation cycle of fatty acid synthesis (FAS II). Catalyzes the reduction of a carbon-carbon double bond in an enoyl moiety that is covalently linked to an acyl carrier protein (ACP). This Chromohalobacter salexigens (strain ATCC BAA-138 / DSM 3043 / CIP 106854 / NCIMB 13768 / 1H11) protein is Enoyl-[acyl-carrier-protein] reductase [NADH].